The following is a 398-amino-acid chain: MSVRLVLAKGREKSLLRRHPWVFSGAVARMEGKASLGETIDIVDHQGKWLARGAYSPASQIRARVWTFDLSESIDIAFFSRRLQQAQKWRDWLAQKDGLDSYRLIAGESDGLPGITIDRFGNFLVLQLLSAGAEYQRAALISALQTLYPECAIYDRSDVAVRKKEGMELTQGLVTGELPPALLPIEEHGMKLLVDIQHGHKTGYYLDQRDSRLATRRYVENKRVLNCFSYTGGFAVSALMGGCNQVVSVDTSQEALDIARQNVELNKLDLSKAEFVRDDVFKLLRTYRDRGEKFDVIVMDPPKFVENKSQLMGACRGYKDINMLAIQLLNEGGILLTFSCSGLMTSDLFQKIIADAAIDAGRDVQFIEQFRQAADHPVIATYPEGLYLKGFACRVIVM.

One can recognise a PUA domain in the interval 2 to 79 (SVRLVLAKGR…LSESIDIAFF (78 aa)).

Belongs to the methyltransferase superfamily. RlmI family.

It is found in the cytoplasm. It catalyses the reaction cytidine(1962) in 23S rRNA + S-adenosyl-L-methionine = 5-methylcytidine(1962) in 23S rRNA + S-adenosyl-L-homocysteine + H(+). In terms of biological role, specifically methylates the cytosine at position 1962 (m5C1962) of 23S rRNA. The polypeptide is Ribosomal RNA large subunit methyltransferase I (Shigella dysenteriae serotype 1 (strain Sd197)).